A 213-amino-acid polypeptide reads, in one-letter code: Adenylate kinase (213 aa).

10–15 (GAGKGT) provides a ligand contact to ATP. Residues 30-59 (STGDMFRAAMANQTEMGVLAKSYIDKGDLV) form an NMP region. AMP is bound by residues T31, R36, 57 to 59 (DLV), 86 to 89 (GYPR), and Q93. Residues 127–160 (GRIINKKTGETFHKIFNPPVGDYKEEDFYQREDD) form an LID region. ATP-binding positions include R128 and 137 to 138 (TF). Residues R157 and R168 each contribute to the AMP site. K196 serves as a coordination point for ATP.

It belongs to the adenylate kinase family. As to quaternary structure, monomer.

It localises to the cytoplasm. It carries out the reaction AMP + ATP = 2 ADP. Its pathway is purine metabolism; AMP biosynthesis via salvage pathway; AMP from ADP: step 1/1. In terms of biological role, catalyzes the reversible transfer of the terminal phosphate group between ATP and AMP. Plays an important role in cellular energy homeostasis and in adenine nucleotide metabolism. This Streptococcus equi subsp. zooepidemicus (strain H70) protein is Adenylate kinase.